The primary structure comprises 117 residues: Aspartate 1-decarboxylase (117 aa).

The Schiff-base intermediate with substrate; via pyruvic acid role is filled by S25. Residue S25 is modified to Pyruvic acid (Ser). T57 provides a ligand contact to substrate. Y58 acts as the Proton donor in catalysis. 73-75 (GAA) provides a ligand contact to substrate.

Belongs to the PanD family. As to quaternary structure, heterooctamer of four alpha and four beta subunits. Pyruvate serves as cofactor. Is synthesized initially as an inactive proenzyme, which is activated by self-cleavage at a specific serine bond to produce a beta-subunit with a hydroxyl group at its C-terminus and an alpha-subunit with a pyruvoyl group at its N-terminus.

Its subcellular location is the cytoplasm. The catalysed reaction is L-aspartate + H(+) = beta-alanine + CO2. It functions in the pathway cofactor biosynthesis; (R)-pantothenate biosynthesis; beta-alanine from L-aspartate: step 1/1. In terms of biological role, catalyzes the pyruvoyl-dependent decarboxylation of aspartate to produce beta-alanine. The polypeptide is Aspartate 1-decarboxylase (Thermoanaerobacter pseudethanolicus (strain ATCC 33223 / 39E) (Clostridium thermohydrosulfuricum)).